The sequence spans 517 residues: Ribonuclease Y (517 aa).

The helical transmembrane segment at 1–21 (MIESLIALIAAIVGLGIGYLV) threads the bilayer. The 67-residue stretch at 207–273 (LINVINIKND…TKVIELLVED (67 aa)) folds into the KH domain. In terms of domain architecture, HD spans 333 to 426 (ALAHSLEVAH…VCAADTLSAA (94 aa)).

This sequence belongs to the RNase Y family.

The protein resides in the cell membrane. In terms of biological role, endoribonuclease that initiates mRNA decay. The sequence is that of Ribonuclease Y from Campylobacter jejuni subsp. jejuni serotype O:2 (strain ATCC 700819 / NCTC 11168).